The following is a 248-amino-acid chain: PF03932 family protein CutC (248 aa).

Belongs to the CutC family. In terms of assembly, homodimer.

The protein resides in the cytoplasm. This chain is PF03932 family protein CutC, found in Escherichia coli O45:K1 (strain S88 / ExPEC).